Reading from the N-terminus, the 190-residue chain is Glucose-6-phosphate isomerase (190 aa).

4 residues coordinate Fe cation: His89, His91, Glu98, and His137.

The protein belongs to the archaeal-type GPI family. As to quaternary structure, homodimer. Fe cation serves as cofactor.

The protein localises to the cytoplasm. It carries out the reaction alpha-D-glucose 6-phosphate = beta-D-fructose 6-phosphate. Its pathway is carbohydrate degradation; glycolysis; D-glyceraldehyde 3-phosphate and glycerone phosphate from D-glucose: step 2/4. Inhibited by mannose 6-phosphate, fructose 1-phosphate and fructose 1,6-bisphosphate. Its activity is also inhibited by Cobalt (II) ions &lt; EDTA &lt; nickel (II) ions &lt; zinc (II) ions &lt;&lt; cadmium (II) ions &lt; copper (II) ions. Sodium and potassium ions and manganese ions show little or no effect on activity. The protein is Glucose-6-phosphate isomerase (pgiA) of Thermococcus litoralis.